A 525-amino-acid polypeptide reads, in one-letter code: Protein kinase PINOID 2 (525 aa).

Positions 1–27 are disordered; it reads MANSSIFYKDNESDYESSTVGPDSSRR. Residues 87 to 465 form the Protein kinase domain; that stretch reads FRLLKRLGSG…SIEIKRHEFF (379 aa). ATP contacts are provided by residues 93-101 and K118; that span reads LGSGDIGSV. The active-site Proton acceptor is D214. Residues 466 to 525 enclose the AGC-kinase C-terminal domain; sequence EGVNWALIRSIKPPWVPKEETSHKTKGDNRSVNYYLPPRFMMSRKERNEPYHVSNYFDYF.

Belongs to the protein kinase superfamily. Ser/Thr protein kinase family.

It catalyses the reaction L-seryl-[protein] + ATP = O-phospho-L-seryl-[protein] + ADP + H(+). It carries out the reaction L-threonyl-[protein] + ATP = O-phospho-L-threonyl-[protein] + ADP + H(+). In terms of biological role, serine/threonine-protein kinase involved in the regulation of auxin signaling. Plays a minor role in the regulation of cellular auxin efflux and cotyledon organogenesis. The chain is Protein kinase PINOID 2 (PID2) from Arabidopsis thaliana (Mouse-ear cress).